A 183-amino-acid chain; its full sequence is Large ribosomal subunit protein uL6 (183 aa).

It belongs to the universal ribosomal protein uL6 family. In terms of assembly, part of the 50S ribosomal subunit.

This protein binds to the 23S rRNA, and is important in its secondary structure. It is located near the subunit interface in the base of the L7/L12 stalk, and near the tRNA binding site of the peptidyltransferase center. This chain is Large ribosomal subunit protein uL6, found in Chlamydia abortus (strain DSM 27085 / S26/3) (Chlamydophila abortus).